The following is a 327-amino-acid chain: Malate dehydrogenase (327 aa).

NAD(+) is bound at residue 12–18 (GAAGQIC). 2 residues coordinate substrate: arginine 92 and arginine 98. Residues asparagine 105, glutamine 112, and 129-131 (TGN) each bind NAD(+). Substrate is bound by residues asparagine 131 and arginine 162. The Proton acceptor role is filled by histidine 187.

This sequence belongs to the LDH/MDH superfamily. MDH type 2 family.

It carries out the reaction (S)-malate + NAD(+) = oxaloacetate + NADH + H(+). In terms of biological role, catalyzes the reversible oxidation of malate to oxaloacetate. This chain is Malate dehydrogenase, found in Cutibacterium acnes (strain DSM 16379 / KPA171202) (Propionibacterium acnes).